The primary structure comprises 109 residues: RYamide neuropeptides (109 aa).

Residues 1–22 form the signal peptide; it reads MNECVNKLLHLKFLFYFILGIQ. The residue at position 33 (Tyr-33) is a Tyrosine amide. Residues 36 to 53 constitute a propeptide that is removed on maturation; the sequence is STTYDESLKSRRIFIVPR. Tyrosine amide is present on Tyr-63. The propeptide occupies 67–109; the sequence is SGKYLCLSREINKLIVRKRLRNNDKERTPTLSFITKHFLMRNT.

It localises to the secreted. Functionally, neuropeptides RYamide-1 and RYamide-2 are ligands for the G-protein coupled receptor RYa-R. May suppress feeding behavior. The polypeptide is RYamide neuropeptides (Drosophila melanogaster (Fruit fly)).